We begin with the raw amino-acid sequence, 484 residues long: Cysteine--tRNA ligase (484 aa).

Residue cysteine 27 coordinates Zn(2+). A 'HIGH' region motif is present at residues 29 to 39; the sequence is PTTYNYIHLGN. Cysteine 207, histidine 232, and glutamate 236 together coordinate Zn(2+). The short motif at 264–268 is the 'KMSKS' region element; that stretch reads KMSKS. Lysine 267 is an ATP binding site.

Belongs to the class-I aminoacyl-tRNA synthetase family. In terms of assembly, monomer. Zn(2+) is required as a cofactor.

Its subcellular location is the cytoplasm. It catalyses the reaction tRNA(Cys) + L-cysteine + ATP = L-cysteinyl-tRNA(Cys) + AMP + diphosphate. The chain is Cysteine--tRNA ligase from Pelotomaculum thermopropionicum (strain DSM 13744 / JCM 10971 / SI).